The sequence spans 330 residues: Glycerol-3-phosphate dehydrogenase [NAD(P)+] (330 aa).

Positions 11, 33, and 105 each coordinate NADPH. Sn-glycerol 3-phosphate is bound by residues Lys-105, Gly-133, and Ser-135. Ala-137 provides a ligand contact to NADPH. The sn-glycerol 3-phosphate site is built by Lys-188, Asp-241, Ser-251, Arg-252, and Asn-253. The active-site Proton acceptor is the Lys-188. Residue Arg-252 coordinates NADPH. NADPH is bound by residues Val-276 and Glu-278.

The protein belongs to the NAD-dependent glycerol-3-phosphate dehydrogenase family.

The protein localises to the cytoplasm. The catalysed reaction is sn-glycerol 3-phosphate + NAD(+) = dihydroxyacetone phosphate + NADH + H(+). The enzyme catalyses sn-glycerol 3-phosphate + NADP(+) = dihydroxyacetone phosphate + NADPH + H(+). It participates in membrane lipid metabolism; glycerophospholipid metabolism. Its function is as follows. Catalyzes the reduction of the glycolytic intermediate dihydroxyacetone phosphate (DHAP) to sn-glycerol 3-phosphate (G3P), the key precursor for phospholipid synthesis. The protein is Glycerol-3-phosphate dehydrogenase [NAD(P)+] of Acidovorax sp. (strain JS42).